Consider the following 196-residue polypeptide: HTH-type transcriptional regulator EcpR (196 aa).

The 59-residue stretch at 138-196 (KDIKKDKITDREMEIIRMTAQGMQPKSIARIENCSVKTVYTHRRNAEAKLYSKIYKLVQ) folds into the HTH luxR-type domain. The segment at residues 162–181 (PKSIARIENCSVKTVYTHRR) is a DNA-binding region (H-T-H motif).

Belongs to the EcpR/MatA family.

Its subcellular location is the cytoplasm. Its function is as follows. Part of the ecpRABCDE operon, which encodes the E.coli common pilus (ECP). ECP is found in both commensal and pathogenic strains and plays a dual role in early-stage biofilm development and host cell recognition. Positively regulates the expression of the ecp operon. The chain is HTH-type transcriptional regulator EcpR (ecpR) from Escherichia coli O139:H28 (strain E24377A / ETEC).